A 767-amino-acid chain; its full sequence is Protein SQS1 (767 aa).

Over residues 1–17 (MAKRHSHYQGSRRRHAR) the composition is skewed to basic residues. The tract at residues 1-60 (MAKRHSHYQGSRRRHARGSNSKKAGRGNAKGIQGRKIKKKPTPTNSWHNSSIPLGEGDLD) is disordered. The segment covering 42–52 (TPTNSWHNSSI) has biased composition (polar residues). Phosphoserine is present on Ser105. Over residues 176–185 (EDSENEDDDS) the composition is skewed to acidic residues. The interval 176–200 (EDSENEDDDSQNSPSTDHSLSSNES) is disordered. Phosphoserine is present on residues Ser217, Ser255, Ser334, Ser343, and Ser345. The disordered stretch occupies residues 466–493 (YSDIPISDSSDEGDSYEGDSYEDDEDMA). Over residues 474–492 (SSDEGDSYEGDSYEDDEDM) the composition is skewed to acidic residues. Positions 594 to 656 (GLHIQNIKDE…HTSVVVEKIK (63 aa)) constitute an R3H domain. In terms of domain architecture, G-patch spans 720 to 767 (NENIGRRMLEKLGWKSGEGLGIQGNKGISEPIFAKIKKNRSGLRHSES).

This sequence belongs to the SQS1 family.

Its subcellular location is the cytoplasm. It is found in the nucleus. Functionally, may be involved in splicing since overexpression antagonizes the suppression of splicing defects by SPP382 mutants. The protein is Protein SQS1 (SQS1) of Saccharomyces cerevisiae (strain YJM789) (Baker's yeast).